The following is a 121-amino-acid chain: Large ribosomal subunit protein bL19 (121 aa).

This sequence belongs to the bacterial ribosomal protein bL19 family.

This protein is located at the 30S-50S ribosomal subunit interface and may play a role in the structure and function of the aminoacyl-tRNA binding site. In Legionella pneumophila (strain Paris), this protein is Large ribosomal subunit protein bL19.